The chain runs to 334 residues: Fructose-1,6-bisphosphatase class 1 (334 aa).

The Mg(2+) site is built by glutamate 90, aspartate 113, leucine 115, and aspartate 116. Substrate is bound by residues 116–119 (DGSS), asparagine 209, tyrosine 242, and lysine 272. A Mg(2+)-binding site is contributed by glutamate 278.

It belongs to the FBPase class 1 family. Homotetramer. It depends on Mg(2+) as a cofactor.

It localises to the cytoplasm. The enzyme catalyses beta-D-fructose 1,6-bisphosphate + H2O = beta-D-fructose 6-phosphate + phosphate. It participates in carbohydrate biosynthesis; gluconeogenesis. In Actinobacillus pleuropneumoniae serotype 5b (strain L20), this protein is Fructose-1,6-bisphosphatase class 1.